We begin with the raw amino-acid sequence, 185 residues long: Heavy metal-associated isoprenylated plant protein 11 (185 aa).

The 68-residue stretch at 39 to 106 folds into the HMA domain; the sequence is QQNTNVVFKL…ICKHVAIIAA (68 aa). The segment covering 109–158 has biased composition (basic and acidic residues); the sequence is IREPEQNRNPVTRREPNREPEQNRSRVTRREPSREPEPNRAPLARRESRP. The segment at 109–185 is disordered; sequence IREPEQNRNP…GENSDGCIIM (77 aa). At Cys182 the chain carries Cysteine methyl ester. Residue Cys182 is the site of S-farnesyl cysteine attachment. Residues 183–185 constitute a propeptide, removed in mature form; it reads IIM.

This sequence belongs to the HIPP family.

Functionally, probable heavy-metal-binding protein. This chain is Heavy metal-associated isoprenylated plant protein 11, found in Arabidopsis thaliana (Mouse-ear cress).